The sequence spans 308 residues: Urease accessory protein UreD (308 aa).

It belongs to the UreD family. UreD, UreF and UreG form a complex that acts as a GTP-hydrolysis-dependent molecular chaperone, activating the urease apoprotein by helping to assemble the nickel containing metallocenter of UreC. The UreE protein probably delivers the nickel.

It localises to the cytoplasm. Functionally, required for maturation of urease via the functional incorporation of the urease nickel metallocenter. The chain is Urease accessory protein UreD from Psychromonas ingrahamii (strain DSM 17664 / CCUG 51855 / 37).